Consider the following 285-residue polypeptide: 2-hydroxy-6-oxononadienedioate/2-hydroxy-6-oxononatrienedioate hydrolase 1 (285 aa).

The active-site Proton acceptor is the His265.

This sequence belongs to the AB hydrolase superfamily. MhpC family. Homodimer.

The catalysed reaction is (2Z,4E)-2-hydroxy-6-oxonona-2,4-dienedioate + H2O = (2Z)-2-hydroxypenta-2,4-dienoate + succinate + H(+). The enzyme catalyses (2Z,4E,7E)-2-hydroxy-6-oxonona-2,4,7-trienedioate + H2O = (2Z)-2-hydroxypenta-2,4-dienoate + fumarate + H(+). It participates in aromatic compound metabolism; 3-phenylpropanoate degradation. Catalyzes the cleavage of the C5-C6 bond of 2-hydroxy-6-oxononadienedioate and 2-hydroxy-6-oxononatrienedioate, a dienol ring fission product of the bacterial meta-cleavage pathway for degradation of phenylpropionic acid. This chain is 2-hydroxy-6-oxononadienedioate/2-hydroxy-6-oxononatrienedioate hydrolase 1, found in Pseudomonas putida (Arthrobacter siderocapsulatus).